A 99-amino-acid chain; its full sequence is MAEGGFDPCECVCSHEHAMRRLINLLRQSQSYCTDTECLQELPGPSGDNGISVTMILVAWMVIALILFLLRPPNLRGSSLPGKPTSPHNGQDPPAPPVD.

Topologically, residues 1–49 are lumenal; the sequence is MAEGGFDPCECVCSHEHAMRRLINLLRQSQSYCTDTECLQELPGPSGDN. Residues 50–70 form a helical membrane-spanning segment; sequence GISVTMILVAWMVIALILFLL. At 71–99 the chain is on the cytoplasmic side; sequence RPPNLRGSSLPGKPTSPHNGQDPPAPPVD. Positions 78 to 99 are disordered; that stretch reads SSLPGKPTSPHNGQDPPAPPVD.

It is found in the endoplasmic reticulum membrane. This Homo sapiens (Human) protein is Small integral membrane protein 14 (SMIM14).